We begin with the raw amino-acid sequence, 480 residues long: Pyruvate kinase II (480 aa).

Arginine 36 contributes to the substrate binding site. Asparagine 38, serine 40, and aspartate 70 together coordinate K(+). Position 38–41 (38–41 (NFSH)) interacts with ATP. Arginine 77 and lysine 160 together coordinate ATP. Lysine 223 contacts substrate. Glutamate 225 contacts Mg(2+). Positions 251, 252, and 284 each coordinate substrate. Position 252 (aspartate 252) interacts with Mg(2+).

The protein belongs to the pyruvate kinase family. Homotetramer. Requires Mg(2+) as cofactor. It depends on K(+) as a cofactor.

It carries out the reaction pyruvate + ATP = phosphoenolpyruvate + ADP + H(+). It functions in the pathway carbohydrate degradation; glycolysis; pyruvate from D-glyceraldehyde 3-phosphate: step 5/5. With respect to regulation, allosterically activated by AMP and by several sugar phosphates. Belongs to type II PK. In terms of biological role, catalyzes the formation of pyruvate in the last step of glycolysis, it is irreversible under physiological conditions. The reaction is critical for the control of metabolic flux in the second part of glycolysis. The chain is Pyruvate kinase II (pykA) from Salmonella typhimurium (strain LT2 / SGSC1412 / ATCC 700720).